The chain runs to 232 residues: MAREGKRIRAAREGLEPMKLYAIDEAIKLVKSKASAKFDETVEISMNLGVDPRHADQMVRGVCNLPNGSGRTVRVAVFARGAKADDARAAGADIVGAEDLLEIVQGGKIEFDRCIATPDLMPLVGRLGKVLGPRGLMPNPKVGTVTMDVKGAVAAAKGGAVEFRVEKAGIIHAGVGKVSFDEQKLVENIKAFADAVAKAKPTGAKGTYIQRIAVTSTMGPGVKVEPSTVLTA.

This sequence belongs to the universal ribosomal protein uL1 family. Part of the 50S ribosomal subunit.

Functionally, binds directly to 23S rRNA. The L1 stalk is quite mobile in the ribosome, and is involved in E site tRNA release. Its function is as follows. Protein L1 is also a translational repressor protein, it controls the translation of the L11 operon by binding to its mRNA. In Methylorubrum extorquens (strain CM4 / NCIMB 13688) (Methylobacterium extorquens), this protein is Large ribosomal subunit protein uL1.